Consider the following 469-residue polypeptide: MLCLCLYVPIAGAAQTEFQYFESKGLPAELKSIFKLSVFIPSQEFSTYRQWKQKIVQAGDKDLDGQLDFEEFVHYLQDHEKKLRLVFKSLDKKNDGRIDAQEIMQSLRDLGVKISEQQAEKILKSMDKNGTMTIDWNEWRDYHLLHPVENIPEIILYWKHSTIFDVGENLTVPDEFTVEERQTGMWWRHLVAGGGAGAVSRTCTAPLDRLKVLMQVHASRSNNMCIVGGFTQMIREGGAKSLWRGNGINVLKIAPESAIKFMAYEQMKRLVGSDQETLRIHERLVAGSLAGAIAQSSIYPMEVLKTRMALRKTGQYSGMLDCARRILAKEGVAAFYKGYIPNMLGIIPYAGIDLAVYETLKNTWLQRYAVNSADPGVFVLLACGTISSTCGQLASYPLALVRTRMQAQASIEGAPEVTMSSLFKQILRTEGAFGLYRGLAPNFMKVIPAVSISYVVYENLKITLGVQSR.

The interval 1–165 is regulatory N-terminal domain; that stretch reads MLCLCLYVPI…LYWKHSTIFD (165 aa). At 1–189 the chain is on the mitochondrial intermembrane side; the sequence is MLCLCLYVPI…ERQTGMWWRH (189 aa). 3 EF-hand domains span residues 47–80, 78–113, and 114–149; these read TYRQWKQKIVQAGDKDLDGQLDFEEFVHYLQDHE, DHEKKLRLVFKSLDKKNDGRIDAQEIMQSLRDLGVK, and ISEQQAEKILKSMDKNGTMTIDWNEWRDYHLLHPVE. Positions 60, 62, 64, 66, and 71 each coordinate Ca(2+). A linker region region spans residues 151 to 160; sequence IPEIILYWKH. Residues 166–469 are C-terminal transmembrane transporter domain; that stretch reads VGENLTVPDE…LKITLGVQSR (304 aa). Solcar repeat units lie at residues 184-270, 278-363, and 375-463; these read GMWW…MKRL, LRIH…LKNT, and PGVF…LKIT. The chain crosses the membrane as a helical span at residues 190–207; sequence LVAGGGAGAVSRTCTAPL. The Mitochondrial matrix segment spans residues 208–244; sequence DRLKVLMQVHASRSNNMCIVGGFTQMIREGGAKSLWR. Residues 245–264 traverse the membrane as a helical segment; the sequence is GNGINVLKIAPESAIKFMAY. Residues 265 to 287 are Mitochondrial intermembrane-facing; sequence EQMKRLVGSDQETLRIHERLVAG. Residues 288–301 traverse the membrane as a helical segment; the sequence is SLAGAIAQSSIYPM. The Mitochondrial matrix segment spans residues 302-337; the sequence is EVLKTRMALRKTGQYSGMLDCARRILAKEGVAAFYK. Residues 338-357 form a helical membrane-spanning segment; the sequence is GYIPNMLGIIPYAGIDLAVY. At 358 to 380 the chain is on the mitochondrial intermembrane side; sequence ETLKNTWLQRYAVNSADPGVFVL. A helical transmembrane segment spans residues 381–398; sequence LACGTISSTCGQLASYPL. Residues 399–437 are Mitochondrial matrix-facing; sequence ALVRTRMQAQASIEGAPEVTMSSLFKQILRTEGAFGLYR. A helical transmembrane segment spans residues 438-457; that stretch reads GLAPNFMKVIPAVSISYVVY. The Mitochondrial intermembrane segment spans residues 458–469; that stretch reads ENLKITLGVQSR.

The protein belongs to the mitochondrial carrier (TC 2.A.29) family.

The protein localises to the mitochondrion inner membrane. The enzyme catalyses Mg(2+)(out) + phosphate(in) + ATP(out) = Mg(2+)(in) + phosphate(out) + ATP(in). With respect to regulation, activated by an increase in cytosolic calcium levels that induce a conformational change of the N-terminal regulatory domain, uncapping the channel and allowing transport. Functionally, electroneutral antiporter that most probably mediates the transport of adenyl nucleotides through the inner mitochondrial membrane. Originally identified as an ATP-magnesium/inorganic phosphate antiporter, it could have a broader specificity for adenyl nucleotides. By regulating the mitochondrial matrix adenyl nucleotide pool could adapt to changing cellular energetic demands and indirectly regulate adenyl nucleotide-dependent metabolic pathways. The chain is Mitochondrial adenyl nucleotide antiporter SLC25A25 from Mus musculus (Mouse).